The following is a 552-amino-acid chain: Iduronate 2-sulfatase (552 aa).

The first 29 residues, 1–29 (MSPPPPPPIWRQLSFSLLLGSFCIALESA), serve as a signal peptide directing secretion. The propeptide occupies 30–35 (AQGNSA). 3 residues coordinate Ca(2+): Asp-47, Asp-48, and Cys-86. Cys-86 functions as the Nucleophile in the catalytic mechanism. The residue at position 86 (Cys-86) is a 3-oxoalanine (Cys). N-linked (GlcNAc...) asparagine glycosylation occurs at Asn-117. Residue His-140 is part of the active site. A glycan (N-linked (GlcNAc...) asparagine) is linked at Asn-146. Cysteines 173 and 186 form a disulfide. N-linked (GlcNAc...) asparagine glycosylation is found at Asn-248 and Asn-282. Residues Asp-336 and His-337 each coordinate Ca(2+). A disulfide bridge links Cys-424 with Cys-434. Asn-515 and Asn-539 each carry an N-linked (GlcNAc...) asparagine glycan.

Belongs to the sulfatase family. Monomer. The 58-kDa mature form is composed of two chains resulting from proteolitic processing, the 42-kDa chain and the 14-kDa chain that remain stably associated and form the 58-kDa intermediate form which is enzymatically active. Ca(2+) is required as a cofactor. Post-translationally, synthesized as a 75-kDa precursor form in the endoplasmic reticulum (ER), and then processed by proteolytic cleavage through various intermediates to yield a 55-kDa mature form, with the release of an 18 kDa polypeptide. The conversion to 3-oxoalanine (also known as C-formylglycine, FGly), of a serine or cysteine residue in prokaryotes and of a cysteine residue in eukaryotes, is critical for catalytic activity. In terms of tissue distribution, found to be expressed in alpha and beta pancreatic cells.

The protein localises to the lysosome. It carries out the reaction Hydrolysis of the 2-sulfate groups of the L-iduronate 2-sulfate units of dermatan sulfate, heparan sulfate and heparin.. Its function is as follows. Lysosomal enzyme involved in the degradation pathway of dermatan sulfate and heparan sulfate. This is Iduronate 2-sulfatase (Ids) from Mus musculus (Mouse).